Here is a 282-residue protein sequence, read N- to C-terminus: Stress response regulator protein 1 (282 aa).

Low complexity-rich tracts occupy residues 12 to 30 (NLSR…HSST) and 41 to 58 (SLDT…SNNN). Disordered regions lie at residues 12–31 (NLSR…SSTV), 41–84 (SLDT…DDED), and 112–139 (LTPF…TTVV). Residues 66–77 (SDYNSYTHNQYY) show a composition bias toward polar residues. Positions 125 to 139 (SIISSKSSNKSTTVV) are enriched in low complexity. Positions 155-273 (SFLIVDDNII…LDFMANSIDD (119 aa)) constitute a Response regulatory domain. At D206 the chain carries 4-aspartylphosphate.

Its function is as follows. Required for stress adaptation, morphogenesis and virulence. In Candida albicans (strain WO-1) (Yeast), this protein is Stress response regulator protein 1 (SRR1).